The following is a 114-amino-acid chain: SOSS complex subunit C homolog (114 aa).

The segment covering 1–10 (MAFQQHGNQE) has biased composition (polar residues). The tract at residues 1 to 61 (MAFQQHGNQE…AGNTSASRIH (61 aa)) is disordered.

This sequence belongs to the SOSS-C family.

This Nematostella vectensis (Starlet sea anemone) protein is SOSS complex subunit C homolog.